Consider the following 359-residue polypeptide: Lipopolysaccharide 1,6-galactosyltransferase (359 aa).

The UDP site is built by Gln-244 and Glu-276.

This sequence belongs to the glycosyltransferase group 1 family. Glycosyltransferase 4 subfamily.

The catalysed reaction is alpha-D-Glc-(1-&gt;3)-[L-alpha-D-Hep-(1-&gt;7)]-4-O-PO3(2-)-L-alpha-D-Hep-(1-&gt;3)-4-O-PO3(2-)-L-alpha-D-Hep-(1-&gt;5)-[alpha-Kdo-(2-&gt;4)]-alpha-Kdo-(2-&gt;6)-lipid A + UDP-alpha-D-galactose = alpha-D-Gal-(1-&gt;6)-alpha-D-Glc-(1-&gt;3)-[L-alpha-D-Hep-(1-&gt;7)]-4-O-PO3(2-)-L-alpha-D-Hep-(1-&gt;3)-4-O-PO3(2-)-L-alpha-D-Hep-(1-&gt;5)-[alpha-Kdo-(2-&gt;4)]-alpha-Kdo-(2-&gt;6)-lipid A + UDP + H(+). The protein operates within bacterial outer membrane biogenesis; LPS core biosynthesis. Its function is as follows. Galactosyltransferase involved in the biosynthesis of the core oligosaccharide region of lipopolysaccharide (LPS). Catalyzes the addition of galactose from UDP-galactose to the first glucose residue of the LPS outer core. This Salmonella typhimurium (strain LT2 / SGSC1412 / ATCC 700720) protein is Lipopolysaccharide 1,6-galactosyltransferase.